A 202-amino-acid chain; its full sequence is Solute carrier family 66 member 3 (202 aa).

A signal peptide spans 1-19 (MEAGLLWFCNWSTLGVCAA). The next 4 membrane-spanning stretches (helical) occupy residues 33–53 (SARG…LVFL), 64–84 (LTYL…LFVF), 94–114 (LPYM…KWII), and 171–191 (LTIL…TATV).

The protein localises to the membrane. The sequence is that of Solute carrier family 66 member 3 (Slc66a3) from Mus musculus (Mouse).